The primary structure comprises 910 residues: Ubiquitin carboxyl-terminal hydrolase 9 (910 aa).

The region spanning 19 to 134 is the DUSP domain; the sequence is TTPEEEKRIV…GGPPIERKLI (116 aa). A disordered region spans residues 68–89; the sequence is ISGESSEASRPGPIDNHDIIES. The 592-residue stretch at 303–894 folds into the USP domain; sequence AGLSNLGNTC…AAYVLFYRRV (592 aa). The active-site Nucleophile is the C312. The active-site Proton acceptor is H852.

This sequence belongs to the peptidase C19 family.

The catalysed reaction is Thiol-dependent hydrolysis of ester, thioester, amide, peptide and isopeptide bonds formed by the C-terminal Gly of ubiquitin (a 76-residue protein attached to proteins as an intracellular targeting signal).. Functionally, recognizes and hydrolyzes the peptide bond at the C-terminal Gly of ubiquitin. Involved in the processing of poly-ubiquitin precursors as well as that of ubiquitinated proteins. This chain is Ubiquitin carboxyl-terminal hydrolase 9 (UBP9), found in Arabidopsis thaliana (Mouse-ear cress).